Reading from the N-terminus, the 1071-residue chain is Tricorn protease (1071 aa).

The interval Met39–Asp310 is six-bladed beta propeller. Residues Arg131–Arg132 are binds the substrate's C-terminus. The interval Ala326–Lys675 is seven-bladed beta propeller. Residues Val679 to Ser745 are C-1; helical bundle. His746 (charge relay system) is an active-site residue. Residues Arg761–Asp855 are PDZ-like. Residues Arg856–Asn1061 are C-2; alpha-beta sandwich. Gly916–Gly918 contacts substrate. The active-site Nucleophile is the Ser965. Gly993–Thr995 contributes to the substrate binding site. Catalysis depends on Glu1023, which acts as the Charge relay system.

This sequence belongs to the peptidase S41B family. In terms of assembly, part of the Tricorn proteolytic complex. Assembles to form a hexameric toroid, 20 copies of which may then assemble to form an icosahedral supermolecule of 14.6 MDa.

Its subcellular location is the cytoplasm. Its function is as follows. Tricorn degrades oligopeptides (probably derived from the proteasome) and channels the products to F1, F2 and F3 proteases, which then catalyze the terminal degradation step, yielding free amino acids. The polypeptide is Tricorn protease (tri) (Thermoplasma acidophilum (strain ATCC 25905 / DSM 1728 / JCM 9062 / NBRC 15155 / AMRC-C165)).